A 616-amino-acid chain; its full sequence is Chaperone protein HscA (616 aa).

The protein belongs to the heat shock protein 70 family.

In terms of biological role, chaperone involved in the maturation of iron-sulfur cluster-containing proteins. Has a low intrinsic ATPase activity which is markedly stimulated by HscB. Involved in the maturation of IscU. The chain is Chaperone protein HscA from Salmonella agona (strain SL483).